A 449-amino-acid chain; its full sequence is Glucose-6-phosphate isomerase (449 aa).

Glutamate 291 functions as the Proton donor in the catalytic mechanism. Active-site residues include histidine 312 and lysine 426.

The protein belongs to the GPI family.

It localises to the cytoplasm. It carries out the reaction alpha-D-glucose 6-phosphate = beta-D-fructose 6-phosphate. The protein operates within carbohydrate biosynthesis; gluconeogenesis. It functions in the pathway carbohydrate degradation; glycolysis; D-glyceraldehyde 3-phosphate and glycerone phosphate from D-glucose: step 2/4. Functionally, catalyzes the reversible isomerization of glucose-6-phosphate to fructose-6-phosphate. The polypeptide is Glucose-6-phosphate isomerase (Streptococcus pyogenes serotype M6 (strain ATCC BAA-946 / MGAS10394)).